The following is a 550-amino-acid chain: Glucose-6-phosphate isomerase (550 aa).

E356 (proton donor) is an active-site residue. Residues H387 and K515 contribute to the active site.

It belongs to the GPI family.

The protein localises to the cytoplasm. It catalyses the reaction alpha-D-glucose 6-phosphate = beta-D-fructose 6-phosphate. It participates in carbohydrate biosynthesis; gluconeogenesis. It functions in the pathway carbohydrate degradation; glycolysis; D-glyceraldehyde 3-phosphate and glycerone phosphate from D-glucose: step 2/4. Functionally, catalyzes the reversible isomerization of glucose-6-phosphate to fructose-6-phosphate. The chain is Glucose-6-phosphate isomerase from Vibrio parahaemolyticus serotype O3:K6 (strain RIMD 2210633).